The sequence spans 79 residues: Protein RALF-like 15 (79 aa).

Residues 1–28 (MGMSKSIKVIVSLALILFLALAATKVEA) form the signal peptide. 2 disulfide bridges follow: Cys46–Cys54 and Cys66–Cys72.

The protein belongs to the plant rapid alkalinization factor (RALF) family.

The protein resides in the secreted. Functionally, cell signaling peptide that may regulate plant stress, growth, and development. Mediates a rapid alkalinization of extracellular space by mediating a transient increase in the cytoplasmic Ca(2+) concentration leading to a calcium-dependent signaling events through a cell surface receptor and a concomitant activation of some intracellular mitogen-activated protein kinases. The chain is Protein RALF-like 15 (RALFL15) from Arabidopsis thaliana (Mouse-ear cress).